We begin with the raw amino-acid sequence, 426 residues long: Protein arginine methyltransferase NDUFAF7 homolog, mitochondrial (426 aa).

The protein belongs to the NDUFAF7 family.

It is found in the mitochondrion. The catalysed reaction is L-arginyl-[protein] + 2 S-adenosyl-L-methionine = N(omega),N(omega)'-dimethyl-L-arginyl-[protein] + 2 S-adenosyl-L-homocysteine + 2 H(+). In terms of biological role, arginine methyltransferase involved in the assembly or stability of mitochondrial NADH:ubiquinone oxidoreductase complex (complex I). The protein is Protein arginine methyltransferase NDUFAF7 homolog, mitochondrial of Caenorhabditis elegans.